A 129-amino-acid polypeptide reads, in one-letter code: Glycine cleavage system H protein (129 aa).

Residues 24–106 (IAVIGISAYA…YEQGWLLKVQ (83 aa)) form the Lipoyl-binding domain. An N6-lipoyllysine modification is found at Lys-65.

This sequence belongs to the GcvH family. In terms of assembly, the glycine cleavage system is composed of four proteins: P, T, L and H. It depends on (R)-lipoate as a cofactor.

Functionally, the glycine cleavage system catalyzes the degradation of glycine. The H protein shuttles the methylamine group of glycine from the P protein to the T protein. This is Glycine cleavage system H protein from Synechococcus elongatus (strain ATCC 33912 / PCC 7942 / FACHB-805) (Anacystis nidulans R2).